Here is a 177-residue protein sequence, read N- to C-terminus: Large ribosomal subunit protein uL6 (177 aa).

The protein belongs to the universal ribosomal protein uL6 family. Part of the 50S ribosomal subunit.

Its function is as follows. This protein binds to the 23S rRNA, and is important in its secondary structure. It is located near the subunit interface in the base of the L7/L12 stalk, and near the tRNA binding site of the peptidyltransferase center. The sequence is that of Large ribosomal subunit protein uL6 from Bartonella bacilliformis (strain ATCC 35685 / KC583 / Herrer 020/F12,63).